We begin with the raw amino-acid sequence, 690 residues long: Protein arginine N-methyltransferase 7 (690 aa).

SAM-dependent MTase PRMT-type domains lie at 14 to 357 and 366 to 690; these read ENSW…YSLW and AKSV…QKKP.

The protein belongs to the class I-like SAM-binding methyltransferase superfamily. Protein arginine N-methyltransferase family. PRMT7 subfamily.

Its function is as follows. Essential arginine methyltransferase that can both catalyze the formation of omega-N monomethylarginine (MMA) and symmetrical dimethylarginine (sDMA). Specifically mediates the symmetrical dimethylation of arginine residues in the small nuclear ribonucleoproteins SmD1 and SmD3. This is Protein arginine N-methyltransferase 7 (Art7) from Drosophila ananassae (Fruit fly).